The sequence spans 56 residues: Large ribosomal subunit protein bL32 (56 aa).

The interval 1-28 is disordered; that stretch reads MAVQQNRKTRSKRGMRRSHDALTTAALS. A compositionally biased stretch (basic residues) spans 7-16; sequence RKTRSKRGMR.

It belongs to the bacterial ribosomal protein bL32 family.

This chain is Large ribosomal subunit protein bL32, found in Vibrio vulnificus (strain CMCP6).